Reading from the N-terminus, the 122-residue chain is Large ribosomal subunit protein uL14 (122 aa).

The protein belongs to the universal ribosomal protein uL14 family. In terms of assembly, part of the 50S ribosomal subunit. Forms a cluster with proteins L3 and L19. In the 70S ribosome, L14 and L19 interact and together make contacts with the 16S rRNA in bridges B5 and B8.

Functionally, binds to 23S rRNA. Forms part of two intersubunit bridges in the 70S ribosome. The chain is Large ribosomal subunit protein uL14 from Thioalkalivibrio sulfidiphilus (strain HL-EbGR7).